The sequence spans 642 residues: Forkhead box protein K2 (642 aa).

Positions 30 to 91 constitute an FHA domain; the sequence is VTIGRNSSQG…NGVFVDGVFQ (62 aa). Residues 201–221 form a disordered region; sequence QSENDKDASGGDSPKDDSKPP. Residues 203-219 are compositionally biased toward basic and acidic residues; that stretch reads ENDKDASGGDSPKDDSK. Residues 219–314 constitute a DNA-binding region (fork-head); it reads KPPYSYAQLI…EQAFRKRRPR (96 aa). The DNA-binding; major groove stretch occupies residues 261–279; sequence KGWQNSIRHNLSLNRYFIK. Mg(2+) contacts are provided by L271, S272, N274, and F277. DNA-binding; minor groove regions lie at residues 289–293 and 309–314; these read KGSFW and RKRRPR. Disordered stretches follow at residues 323 to 359 and 589 to 615; these read LGPLSSRSAPASPNHSGVFSAHSSGVQTPESLSREGS and ASASLPTKRQNGDQSEQPDIKRGKTDE. 2 stretches are compositionally biased toward polar residues: residues 327 to 353 and 589 to 605; these read SSRSAPASPNHSGVFSAHSSGVQTPES and ASASLPTKRQNGDQSEQ. Residues 606 to 615 are compositionally biased toward basic and acidic residues; it reads PDIKRGKTDE.

In terms of tissue distribution, in neurula embryos, expressed strongly in the future floor plate and weakly in the neural crest progenitor cells. As development progresses, expression becomes stronger in neural crest cells. At stage 24, expressed in the eye, brain, branchial arches and in the presomitic mesoderm in the posterior embryo. At stage 29, additionally expressed in the pronephric tubules. At stage 35, expressed in the migrating lateral muscle precursors of the abdomen. Additionally, the developing proctodeum and head structures including the branchial arches, eyes and otic vesicles continue to show expression. Expression also persists in the nephros.

Its subcellular location is the nucleus. The protein resides in the cytoplasm. Its function is as follows. Transcriptional regulator involved in different processes such as glucose metabolism, aerobic glycolysis and autophagy. Recognizes and binds the forkhead DNA sequence motif (5'-GTAAACA-3') and can both act as a transcription activator or repressor, depending on the context. Acts as a key regulator of metabolic reprogramming towards aerobic glycolysis, a process in which glucose is converted to lactate in the presence of oxygen. Acts as a negative regulator of autophagy in skeletal muscle: in response to starvation, enters the nucleus, binds the promoters of autophagy genes and represses their expression, preventing proteolysis of skeletal muscle proteins. The protein is Forkhead box protein K2 of Xenopus laevis (African clawed frog).